The primary structure comprises 58 residues: uncharacterized protein (58 aa).

This is an uncharacterized protein from Bacillus anthracis.